The sequence spans 76 residues: uncharacterized protein (76 aa).

The segment at 36 to 41 (PDIIIT) is required for interaction with PPP3CA. Thr-44 and Thr-46 each carry phosphothreonine.

Interacts (via PxIxIT motif, when phosphorylated on Thr-44) with PPP3CA. Not expressed in pancreatic duct cells (at protein level). Abundantly expressed in the pancreas and weakly expressed in the thyroid. In terms of tissue distribution, not expressed in pancreatic duct cells (at protein level). Abundantly expressed in the lymph node and weakly expressed in the stomach, trachea and bone marrow.

This is an uncharacterized protein from Homo sapiens (Human).